Here is a 246-residue protein sequence, read N- to C-terminus: Transcription factor A, mitochondrial (246 aa).

The N-terminal 42 residues, 1–42, are a transit peptide targeting the mitochondrion; it reads MAFLRSMWGVLSALGRSGAELCTGCGSRLRSPFSFVYLPRWF. The segment at residues 50–118 is a DNA-binding region (HMG box 1); that stretch reads PKKPVSSYLR…VYKEEISRFK (69 aa). 3 positions are modified to phosphoserine; by PKA: Ser-55, Ser-56, and Ser-61. At Thr-122 the chain carries Phosphothreonine. Residues 155-219 constitute a DNA-binding region (HMG box 2); sequence PKRPRSAYNV…RYHNEMKSWE (65 aa). Residue Ser-160 is modified to Phosphoserine; by PKA. Residues Ser-193 and Ser-195 each carry the phosphoserine modification.

As to quaternary structure, monomer; binds DNA as a monomer. Homodimer. Component of the mitochondrial transcription initiation complex, composed at least of TFB2M, TFAM and POLRMT. In this complex TFAM recruits POLRMT to the promoter whereas TFB2M induces structural changes in POLRMT to enable promoter opening and trapping of the DNA non-template strand. Upon metabolic stress, forms a complex composed of FOXO3, SIRT3, TFAM and POLRMT. Interacts with TFB1M and TFB2M. Interacts with CLPX; this enhances DNA-binding. In terms of processing, phosphorylation by PKA within the HMG box 1 impairs DNA binding and promotes degradation by the AAA+ Lon protease.

It is found in the mitochondrion. It localises to the mitochondrion matrix. Its subcellular location is the mitochondrion nucleoid. Functionally, binds to the mitochondrial light strand promoter and functions in mitochondrial transcription regulation. Component of the mitochondrial transcription initiation complex, composed at least of TFB2M, TFAM and POLRMT that is required for basal transcription of mitochondrial DNA. In this complex, TFAM recruits POLRMT to a specific promoter whereas TFB2M induces structural changes in POLRMT to enable promoter opening and trapping of the DNA non-template strand. Required for accurate and efficient promoter recognition by the mitochondrial RNA polymerase. Promotes transcription initiation from the HSP1 and the light strand promoter by binding immediately upstream of transcriptional start sites. Is able to unwind DNA. Bends the mitochondrial light strand promoter DNA into a U-turn shape via its HMG boxes. Required for maintenance of normal levels of mitochondrial DNA. May play a role in organizing and compacting mitochondrial DNA. The polypeptide is Transcription factor A, mitochondrial (Homo sapiens (Human)).